The following is an 82-amino-acid chain: Omega-conotoxin-like 9 (82 aa).

The signal sequence occupies residues 1 to 22 (MKLTCMMIAAVLFLTTWTFVTA). The propeptide occupies 23-51 (DDSRYGLKNLFPKARHEMKNPEASKLNKR). 3 disulfide bridges follow: Cys-54/Cys-69, Cys-61/Cys-73, and Cys-68/Cys-77.

The protein belongs to the conotoxin O1 superfamily. In terms of tissue distribution, expressed by the venom duct.

Its subcellular location is the secreted. Omega-conotoxins act at presynaptic membranes, they bind and block voltage-gated calcium channels (Cav). The protein is Omega-conotoxin-like 9 of Conus striatus (Striated cone).